The chain runs to 367 residues: Otolith matrix protein 1 (367 aa).

Positions 1–23 (MDRLDRRLAATLLLFSFISFSTQ) are cleaved as a signal peptide. The Transferrin-like domain maps to 27-363 (ISWCVVSEAE…YTTVLQAFEC (337 aa)).

Belongs to the transferrin family. In terms of assembly, interacts with OTOL1. As to expression, expressed in the sacculus during the day.

It is found in the secreted. In terms of biological role, required for normal otolith growth and deposition of otolin-1 in the otolith. The protein is Otolith matrix protein 1 (otomp) of Oncorhynchus mykiss (Rainbow trout).